Here is a 513-residue protein sequence, read N- to C-terminus: Bifunctional purine biosynthesis protein PurH (513 aa).

Residues 1-145 (MNKRAIISVY…KNFKYTTVIV (145 aa)) form the MGS-like domain.

The protein belongs to the PurH family.

The catalysed reaction is (6R)-10-formyltetrahydrofolate + 5-amino-1-(5-phospho-beta-D-ribosyl)imidazole-4-carboxamide = 5-formamido-1-(5-phospho-D-ribosyl)imidazole-4-carboxamide + (6S)-5,6,7,8-tetrahydrofolate. The enzyme catalyses IMP + H2O = 5-formamido-1-(5-phospho-D-ribosyl)imidazole-4-carboxamide. It participates in purine metabolism; IMP biosynthesis via de novo pathway; 5-formamido-1-(5-phospho-D-ribosyl)imidazole-4-carboxamide from 5-amino-1-(5-phospho-D-ribosyl)imidazole-4-carboxamide (10-formyl THF route): step 1/1. The protein operates within purine metabolism; IMP biosynthesis via de novo pathway; IMP from 5-formamido-1-(5-phospho-D-ribosyl)imidazole-4-carboxamide: step 1/1. In Caldicellulosiruptor bescii (strain ATCC BAA-1888 / DSM 6725 / KCTC 15123 / Z-1320) (Anaerocellum thermophilum), this protein is Bifunctional purine biosynthesis protein PurH.